The sequence spans 194 residues: Putative manganese efflux pump MntP (194 aa).

6 helical membrane-spanning segments follow: residues 3–23, 37–57, 69–89, 110–132, 147–167, and 172–192; these read PFSI…AAIG, LRAG…GWLL, DHWI…VAGL, LGLA…SLAF, CTFS…NLIG, and MLGG…HLSG.

The protein belongs to the MntP (TC 9.B.29) family.

It is found in the cell inner membrane. In terms of biological role, probably functions as a manganese efflux pump. The sequence is that of Putative manganese efflux pump MntP from Xanthomonas euvesicatoria pv. vesicatoria (strain 85-10) (Xanthomonas campestris pv. vesicatoria).